The primary structure comprises 167 residues: Early nodulin-like protein 16 (167 aa).

A signal peptide spans 1 to 24; sequence MARVAVLVAGAVLAFLLAATNVTA. The Phytocyanin domain occupies 25–126; sequence KRWTVGDNKF…GMKLAVLVEK (102 aa). Residues Asn40, Asn71, Asn86, and Asn99 are each glycosylated (N-linked (GlcNAc...) asparagine). Cys78 and Cys114 form a disulfide bridge. The GPI-anchor amidated asparagine moiety is linked to residue Asn138. The propeptide at 139-167 is removed in mature form; sequence SARRTFSVSGFAYQFLIPVAVFAAVGTRY.

This sequence belongs to the early nodulin-like (ENODL) family.

Its subcellular location is the cell membrane. Functionally, may act as a carbohydrate transporter. The chain is Early nodulin-like protein 16 from Arabidopsis thaliana (Mouse-ear cress).